Reading from the N-terminus, the 552-residue chain is MANPGGGAVCNGKLHNHKKQSNGSQSRNCTKNGIVKEAQQNGKPHFYDKLIVESFEEAPLHVMVFTYMGYGIGTLFGYLRDFLRNWGIEKCNAAVERKEQKDFVPLYQDFENFYTRNLYMRIRDNWNRPICSAPGPLFDLMERVSDDYNWTFRFTGRVIKDVINMGSYNFLGLAAKYDESMRTIKDVLEVYGTGVASTRHEMGTLDKHKELEDLVAKFLNVEAAMVFGMGFATNSMNIPALVGKGCLILSDELNHTSLVLGARLSGATIRIFKHNNTQSLEKLLRDAVIYGQPRTRRAWKKILILVEGVYSMEGSIVHLPQIIALKKKYKAYLYIDEAHSIGAVGPTGRGVTEFFGLDPHEVDVLMGTFTKSFGASGGYIAGRKDLVDYLRVHSHSAVYASSMSPPIAEQIIRSLKLIMGLDGTTQGLQRVQQLAKNTRYFRQRLQEMGFIIYGNENASVVPLLLYMPGKVAAFARHMLEKKIGVVVVGFPATPLAEARARFCVSAAHTREMLDTVLEALDEMGDLLQLKYSRHKKSARPELYDETSFELED.

A disordered region spans residues 1–29; sequence MANPGGGAVCNGKLHNHKKQSNGSQSRNC. A helical membrane pass occupies residues 59–79; it reads PLHVMVFTYMGYGIGTLFGYL. Lys371 carries the post-translational modification N6-(pyridoxal phosphate)lysine.

The protein belongs to the class-II pyridoxal-phosphate-dependent aminotransferase family. Component of the serine palmitoyltransferase (SPT) complex, which is composed of SPTLC1, SPTLC2 or SPTLC3 and SPTSSA or SPTSSB. The heterodimer consisting of SPTLC1 and SPTLC2/SPTLC3 forms the catalytic core of the enzyme, while SPTSSA or SPTSSB subunits determine substrate specificity. SPT also interacts with ORMDL proteins, especially ORMDL3, which negatively regulate SPT activity in the presence of ceramides. The cofactor is pyridoxal 5'-phosphate. Expressed in most tissues, except peripheral blood cells and bone marrow, with highest levels in heart, kidney, liver, uterus and skin.

The protein resides in the endoplasmic reticulum membrane. It carries out the reaction L-serine + hexadecanoyl-CoA + H(+) = 3-oxosphinganine + CO2 + CoA. It catalyses the reaction dodecanoyl-CoA + L-serine + H(+) = 3-oxotetradecasphinganine + CO2 + CoA. The catalysed reaction is tetradecanoyl-CoA + L-serine + H(+) = 3-oxohexadecasphinganine + CO2 + CoA. The enzyme catalyses octadecanoyl-CoA + L-serine + H(+) = 3-oxoeicosasphinganine + CO2 + CoA. Its pathway is lipid metabolism; sphingolipid metabolism. Its activity is regulated as follows. SPT complex catalytic activity is negatively regulated by ORMDL proteins, including ORMDL3, in the presence of ceramides. This mechanism allows to maintain ceramide levels at sufficient concentrations for the production of complex sphingolipids, but which prevents the accumulation of ceramides to levels that trigger apoptosis. Its function is as follows. Component of the serine palmitoyltransferase multisubunit enzyme (SPT) that catalyzes the initial and rate-limiting step in sphingolipid biosynthesis by condensing L-serine and activated acyl-CoA (most commonly palmitoyl-CoA) to form long-chain bases. The SPT complex is composed of SPTLC1, SPTLC2 or SPTLC3 and SPTSSA or SPTSSB. Within this complex, the heterodimer consisting of SPTLC1 and SPTLC2/SPTLC3 forms the catalytic core. The composition of the serine palmitoyltransferase (SPT) complex determines the substrate preference. The SPTLC1-SPTLC2-SPTSSA complex shows a strong preference for C16-CoA substrate, while the SPTLC1-SPTLC3-SPTSSA isozyme uses both C14-CoA and C16-CoA as substrates, with a slight preference for C14-CoA. The SPTLC1-SPTLC2-SPTSSB complex shows a strong preference for C18-CoA substrate, while the SPTLC1-SPTLC3-SPTSSB isozyme displays an ability to use a broader range of acyl-CoAs, without apparent preference. This is Serine palmitoyltransferase 3 from Homo sapiens (Human).